Here is a 340-residue protein sequence, read N- to C-terminus: Sesquiterpene synthase 6 (340 aa).

D90, N229, S233, and E237 together coordinate Mg(2+). The DDXXD motif signature appears at 90–94 (DDITD). The NSE/DTE motif motif lies at 229–237 (NDIYSFNNE). (2E,6E)-farnesyl diphosphate is bound by residues R316 and Y317.

It belongs to the terpene synthase family. The cofactor is Mg(2+).

The catalysed reaction is (2E,6E)-farnesyl diphosphate = delta-cadinene + diphosphate. It catalyses the reaction (2E,6E)-farnesyl diphosphate = bicyclogermacrene + diphosphate. Its function is as follows. Terpene cyclase that catalyzes the cyclization of farnesyl diphosphate (FPP) to various sesquiterpenes, including bicycloelemene, alpha-gurjunene, 9-epi-caryophylene, bicyclosesquiphellandrene, bicyclogermacrene and delta-cadinene. The sequence is that of Sesquiterpene synthase 6 from Postia placenta (strain ATCC 44394 / Madison 698-R) (Brown rot fungus).